The primary structure comprises 132 residues: Galectin-2 (132 aa).

The region spanning 4–131 (ELEVKNMDMK…GFNMSSFKLK (128 aa)) is the Galectin domain. An a beta-D-galactoside-binding site is contributed by 65 to 71 (WGQEQRE).

As to quaternary structure, homodimer.

In terms of biological role, this protein binds beta-galactoside. Its physiological function is not yet known. The chain is Galectin-2 (LGALS2) from Homo sapiens (Human).